We begin with the raw amino-acid sequence, 391 residues long: Casein kinase II subunit alpha (391 aa).

Residues Q36–L41 form an interaction with beta subunit region. The Protein kinase domain maps to Y39–F324. ATP-binding positions include L45 to V53 and K68. Residue D156 is the Proton acceptor of the active site. The span at G335–V346 shows a compositional bias: polar residues. Residues G335–P363 form a disordered region. The segment covering S347 to S357 has biased composition (low complexity).

It belongs to the protein kinase superfamily. Ser/Thr protein kinase family. CK2 subfamily. Tetramer composed of an alpha chain, an alpha' and two beta chains. Interacts with RNPS1.

It is found in the nucleus. It carries out the reaction L-seryl-[protein] + ATP = O-phospho-L-seryl-[protein] + ADP + H(+). It catalyses the reaction L-threonyl-[protein] + ATP = O-phospho-L-threonyl-[protein] + ADP + H(+). Functionally, catalytic subunit of a constitutively active serine/threonine-protein kinase complex that phosphorylates a large number of substrates containing acidic residues C-terminal to the phosphorylated serine or threonine. Regulates numerous cellular processes, such as cell cycle progression, apoptosis and transcription, as well as viral infection. May act as a regulatory node which integrates and coordinates numerous signals leading to an appropriate cellular response. During mitosis, functions as a component of the p53/TP53-dependent spindle assembly checkpoint (SAC) that maintains cyclin-B-CDK1 activity and G2 arrest in response to spindle damage. Can also negatively regulate apoptosis. Phosphorylates the caspases CASP9 and CASP2 and the apoptotic regulator NOL3. Phosphorylation protects CASP9 from cleavage and activation by CASP8, and inhibits the dimerization of CASP2 and activation of CASP8. Plays an important role in the circadian clock function by phosphorylating BMAL1. In Gallus gallus (Chicken), this protein is Casein kinase II subunit alpha (CSNK2A1).